Reading from the N-terminus, the 347-residue chain is Spermatogenesis associated 6-like protein (347 aa).

Residues S115–K199 are disordered. The segment covering K116 to T125 has biased composition (polar residues). Basic residues predominate over residues L153–S166. The span at P170–D183 shows a compositional bias: basic and acidic residues. 2 positions are modified to phosphoserine: S218 and S221. The segment at E234–P285 is disordered. Residues P254–R277 show a composition bias toward polar residues.

Belongs to the SPATA6 family.

This is Spermatogenesis associated 6-like protein (Spata6l) from Mus musculus (Mouse).